The chain runs to 358 residues: UDP-N-acetylglucosamine--N-acetylmuramyl-(pentapeptide) pyrophosphoryl-undecaprenol N-acetylglucosamine transferase (358 aa).

Residues 11-13, Asn124, Arg164, Ser195, and Gln291 each bind UDP-N-acetyl-alpha-D-glucosamine; that span reads TGG.

The protein belongs to the glycosyltransferase 28 family. MurG subfamily.

The protein resides in the cell inner membrane. It carries out the reaction di-trans,octa-cis-undecaprenyl diphospho-N-acetyl-alpha-D-muramoyl-L-alanyl-D-glutamyl-meso-2,6-diaminopimeloyl-D-alanyl-D-alanine + UDP-N-acetyl-alpha-D-glucosamine = di-trans,octa-cis-undecaprenyl diphospho-[N-acetyl-alpha-D-glucosaminyl-(1-&gt;4)]-N-acetyl-alpha-D-muramoyl-L-alanyl-D-glutamyl-meso-2,6-diaminopimeloyl-D-alanyl-D-alanine + UDP + H(+). It participates in cell wall biogenesis; peptidoglycan biosynthesis. Its function is as follows. Cell wall formation. Catalyzes the transfer of a GlcNAc subunit on undecaprenyl-pyrophosphoryl-MurNAc-pentapeptide (lipid intermediate I) to form undecaprenyl-pyrophosphoryl-MurNAc-(pentapeptide)GlcNAc (lipid intermediate II). This is UDP-N-acetylglucosamine--N-acetylmuramyl-(pentapeptide) pyrophosphoryl-undecaprenol N-acetylglucosamine transferase from Leptospira interrogans serogroup Icterohaemorrhagiae serovar copenhageni (strain Fiocruz L1-130).